An 823-amino-acid chain; its full sequence is MHDVWRTILSRFKQNTNAIKTRFDKYRALCKELGLQRDEWSESIFLDDLEKLLKLTAKFEMALMPSNGVDTHVNGVITKINGFNNGFDTHINGFDTRINGFHTHTNGFDRGLELWQIEERYRALAQLQSTLGSFFERACPGYDQSKIPWFFDPSYYQCQGVNYDRFASPDVRDREQQLLETLQLGSNQNPKLLLMSSGMASFTVIQQYVVQQLNYGDTVVVSPYIYFESFQPMRSQKSLTVVNAKGFDPESIIEAAERNNARAVFLDPMCNTVGLDTIDIRRFAHLVANRGGWADRLVIVDGTLVSGGMQLYDWFDGPHCPKVLYYESAHKYIQLGLDLIMCGYVVMPEDLVPAIQLIRQITGTVLYSRNASLLPPIDKTIFNFRMSRLTTNAEKLHRLLDAESRNMAEVTFPHHWRDYRWRHGGNVVTVRFHGEGLNKRSNLERCCDDILRAAEEEGVQMVKGASLGFSTTRIFVADAFFENTDPFLRISVGVQSEDIETVARAVLSGIKRYCMSAVPVNLDVGQRLYDAKFYIAMASMLEVRARYAKDRVVFMEGEWLVPILKALGAREEDFDALQQVSHHLGKDPTVDYRTIRNGLFYFNFENKAIQRFQKQRFTLTVQENYKRHDSGLPRDFPEVRGDLQYNTVLQALMVAKAFIMNKVDVEPRAHLDYSSPNFLCNVFNIRTFTEKNILGEPTLEGVHADGADHTMTTFLGCTNMRSDSGITFIHDQKEITGIPATEAQPSLIKHRFQHRHFLDSLLFADNEAKHSLTSVFQEDVSKRATRDMLLFLTRKPKLAGHSSGSVDAMEPHKTLPMNVPLWL.

The pyridoxal 5'-phosphate-dependent lyase stretch occupies residues T56–I535. Residue K331 is modified to N6-(pyridoxal phosphate)lysine. The tract at residues D573–L823 is alpha-ketoglutarate-dependent oxygenase. Fe cation contacts are provided by H703 and D705.

In the N-terminal section; belongs to the trans-sulfuration enzymes family. The protein in the C-terminal section; belongs to the iron/ascorbate-dependent oxidoreductase family. Pyridoxal 5'-phosphate is required as a cofactor. Requires Fe(2+) as cofactor.

The enzyme catalyses O-acetyl-L-homoserine + 3-methyl-2-oxobutanoate = (6S)-6-amino-3,3-dimethyl-2-oxoheptanedioate + acetate + H(+). It catalyses the reaction (6S)-3,3-dimethylpiperidine-2,6-dicarboxylate + 2-oxoglutarate + AH2 + O2 + H(+) = (2S)-5,5-dimethylpiperidine-2-carboxylate + succinate + A + 2 CO2 + H2O. Its pathway is secondary metabolite biosynthesis; terpenoid biosynthesis. Its function is as follows. Bifunctional enzyme; part of the gene cluster that mediates the biosynthesis of flavunoidine, an alkaloidal terpenoid with a tetracyclic cage-like core connected to dimethylcadaverine via a C-N bond and acylated with 5,5-dimethyl-L-pipecolate. The tetracyclic core is synthesized by the terpene cyclase flvE and the cytochrome P450 monooxygenase flvD. The terpene cyclase flvE catalyzes the cyclization of farnesyl pyrophosphate (FPP) to form (1R,4R,5S)-(+)-acoradiene and the cytochrome P450 monooxygenase flvD is then responsible for oxidative conversion of (1R,4R,5S)-(+)-acoradiene into the tetracyclic cage present in the final product flavunoidine. In parallel, the N-methyltransferase flvH dimethylates L-lysine to give N,N-dimethyl-L-Lysin which is decarboxylated by flvG to afford dimethylcadaverine. The terpene cyclase-like protein flvF is the enzyme that attaches the dimethylcadaverine precusor at the C-7 of the tetracyclic cage to yield pre-flavunoidine. The cytochrome monooxygenase flvC hydroxylates the C-10 position of pre-flavunoidine whereas the NRPS flvI acylates the terpenoid core at the hydroxylated C-10 with dimethylpipecolate to yield final flavunoidine. The bifunctional enzyme flvA and the dehydrogenase flvB are responsible for the synthesis of the dimethylpipecolate precursor. The PLP-dependent lyase domain of flvA might use L-O-acetyl-homoserine and alpha-keto-isovalerate to form an intermediary ketone that can cyclize intramolecularly to yield an imine. The imine can be reduced by flvB to yield the 6-carboxylated pipecolate. The C-terminal alpha-KG-dependent oxygenase domain of flvA is then proposed to catalyze the decarboxylation to yield dimethylpipecolate. The sequence is that of Bifunctional enzyme flvA from Aspergillus flavus (strain ATCC 200026 / FGSC A1120 / IAM 13836 / NRRL 3357 / JCM 12722 / SRRC 167).